A 225-amino-acid chain; its full sequence is Urease accessory protein UreF (225 aa).

Belongs to the UreF family. As to quaternary structure, ureD, UreF and UreG form a complex that acts as a GTP-hydrolysis-dependent molecular chaperone, activating the urease apoprotein by helping to assemble the nickel containing metallocenter of UreC. The UreE protein probably delivers the nickel.

It is found in the cytoplasm. Required for maturation of urease via the functional incorporation of the urease nickel metallocenter. The chain is Urease accessory protein UreF from Thermosynechococcus vestitus (strain NIES-2133 / IAM M-273 / BP-1).